Reading from the N-terminus, the 159-residue chain is MPTWHYSTDIAEKNPEKTAKAMMWDAPISPKEATELARVIRGMKLTEAKAYLERVIKMEEPVPYRRYHGKVAHKRGLADKHGIPMGRYPVKAAKYFLKLLKNVEANAEFKGLEVEKLKIVHIASHKGMTIKRWMPRAFGRATPEFERRTHLEVIVEEVE.

Belongs to the universal ribosomal protein uL22 family. As to quaternary structure, part of the 50S ribosomal subunit.

Its function is as follows. This protein binds specifically to 23S rRNA. It makes multiple contacts with different domains of the 23S rRNA in the assembled 50S subunit and ribosome. Functionally, the globular domain of the protein is located near the polypeptide exit tunnel on the outside of the subunit, while an extended beta-hairpin is found that lines the wall of the exit tunnel in the center of the 70S ribosome. The protein is Large ribosomal subunit protein uL22 of Ignicoccus hospitalis (strain KIN4/I / DSM 18386 / JCM 14125).